A 257-amino-acid chain; its full sequence is Zinc transporter ZupT (257 aa).

Helical transmembrane passes span 5–25, 33–53, 61–81, 109–129, 137–157, 171–191, 195–215, and 236–256; these read LILT…GVLG, LAFS…MEML, GMSP…YFGL, AILL…ATFV, LGFG…LAVA, IFWA…AWLI, LVSP…MVAL, and GVLC…TIGI. Residues Asn120 and Glu123 each contribute to the Fe(2+) site. Residues Glu123 and His148 each coordinate Zn(2+). Fe(2+)-binding residues include Asn149, Glu152, and Glu181. Glu152 contacts Zn(2+).

This sequence belongs to the ZIP transporter (TC 2.A.5) family. ZupT subfamily.

The protein resides in the cell inner membrane. It catalyses the reaction Zn(2+)(in) = Zn(2+)(out). Functionally, mediates zinc uptake. May also transport other divalent cations. The sequence is that of Zinc transporter ZupT from Salmonella paratyphi A (strain ATCC 9150 / SARB42).